Here is a 394-residue protein sequence, read N- to C-terminus: Quinolinate synthase (394 aa).

Iminosuccinate contacts are provided by H67 and S84. [4Fe-4S] cluster is bound at residue C131. Iminosuccinate contacts are provided by residues Y163–N165 and S184. C254 provides a ligand contact to [4Fe-4S] cluster. Residues H280 to E282 and T297 contribute to the iminosuccinate site. C346 provides a ligand contact to [4Fe-4S] cluster.

It belongs to the quinolinate synthase family. Type 3 subfamily. [4Fe-4S] cluster is required as a cofactor.

The protein resides in the cytoplasm. The catalysed reaction is iminosuccinate + dihydroxyacetone phosphate = quinolinate + phosphate + 2 H2O + H(+). It participates in cofactor biosynthesis; NAD(+) biosynthesis; quinolinate from iminoaspartate: step 1/1. Its function is as follows. Catalyzes the condensation of iminoaspartate with dihydroxyacetone phosphate to form quinolinate. The protein is Quinolinate synthase of Streptomyces coelicolor (strain ATCC BAA-471 / A3(2) / M145).